Here is a 534-residue protein sequence, read N- to C-terminus: CTP synthase (534 aa).

Residues 1-267 form an amidoligase domain region; sequence MTKYIFVTGG…DQIVCDHLKL (267 aa). S13 is a binding site for CTP. S13 lines the UTP pocket. 14–19 lines the ATP pocket; sequence SIGKGI. L-glutamine is bound at residue Y54. Position 71 (D71) interacts with ATP. The Mg(2+) site is built by D71 and E141. CTP is bound by residues 148–150, 188–193, and K224; these read DIE and KTKPTQ. UTP-binding positions include 188-193 and K224; that span reads KTKPTQ. Positions 292–534 constitute a Glutamine amidotransferase type-1 domain; it reads KIALVGKYVE…FVTAAVENAK (243 aa). Residue G354 coordinates L-glutamine. The active-site Nucleophile; for glutamine hydrolysis is the C381. Residues 382–385, E405, and R463 contribute to the L-glutamine site; that span reads LGMQ. Active-site residues include H508 and E510.

The protein belongs to the CTP synthase family. As to quaternary structure, homotetramer.

It carries out the reaction UTP + L-glutamine + ATP + H2O = CTP + L-glutamate + ADP + phosphate + 2 H(+). It catalyses the reaction L-glutamine + H2O = L-glutamate + NH4(+). The catalysed reaction is UTP + NH4(+) + ATP = CTP + ADP + phosphate + 2 H(+). It functions in the pathway pyrimidine metabolism; CTP biosynthesis via de novo pathway; CTP from UDP: step 2/2. Its activity is regulated as follows. Allosterically activated by GTP, when glutamine is the substrate; GTP has no effect on the reaction when ammonia is the substrate. The allosteric effector GTP functions by stabilizing the protein conformation that binds the tetrahedral intermediate(s) formed during glutamine hydrolysis. Inhibited by the product CTP, via allosteric rather than competitive inhibition. Functionally, catalyzes the ATP-dependent amination of UTP to CTP with either L-glutamine or ammonia as the source of nitrogen. Regulates intracellular CTP levels through interactions with the four ribonucleotide triphosphates. The protein is CTP synthase of Streptococcus thermophilus (strain CNRZ 1066).